Here is a 218-residue protein sequence, read N- to C-terminus: 1-Cys peroxiredoxin PER1 (218 aa).

One can recognise a Thioredoxin domain in the interval 4–164; that stretch reads LTIGDTVPNL…VVRAVDSLLT (161 aa). Cys-46 (cysteine sulfenic acid (-SOH) intermediate) is an active-site residue. The Bipartite nuclear localization signal motif lies at 194 to 217; sequence KKMFPQGFETADLPSKKGYLRFTK.

Belongs to the peroxiredoxin family. Prx6 subfamily.

Its subcellular location is the nucleus. The protein localises to the cytoplasm. It catalyses the reaction a hydroperoxide + [thioredoxin]-dithiol = an alcohol + [thioredoxin]-disulfide + H2O. In terms of biological role, thiol-specific peroxidase that catalyzes the reduction of hydrogen peroxide and organic hydroperoxides to water and alcohols, respectively. Seems to contribute to the inhibition of germination during stress. The sequence is that of 1-Cys peroxiredoxin PER1 (PER1) from Triticum aestivum (Wheat).